We begin with the raw amino-acid sequence, 212 residues long: Fibrillarin-like rRNA/tRNA 2'-O-methyltransferase (212 aa).

Residues 73 to 74 (TT), 91 to 92 (EI), 116 to 117 (DA), and 136 to 139 (DVAQ) contribute to the S-adenosyl-L-methionine site.

It belongs to the methyltransferase superfamily. Fibrillarin family. Interacts with nop5. Component of box C/D small ribonucleoprotein (sRNP) particles that contain rpl7ae, FlpA and nop5, plus a guide RNA.

Involved in pre-rRNA and tRNA processing. Utilizes the methyl donor S-adenosyl-L-methionine to catalyze the site-specific 2'-hydroxyl methylation of ribose moieties in rRNA and tRNA. Site specificity is provided by a guide RNA that base pairs with the substrate. Methylation occurs at a characteristic distance from the sequence involved in base pairing with the guide RNA. The protein is Fibrillarin-like rRNA/tRNA 2'-O-methyltransferase of Methanothrix thermoacetophila (strain DSM 6194 / JCM 14653 / NBRC 101360 / PT) (Methanosaeta thermophila).